The sequence spans 295 residues: Xyloglucan endotransglucosylase protein 2 (295 aa).

The first 23 residues, 1–23 (MAMGTHFGGLWLALLCMVSATMG), serve as a signal peptide directing secretion. Residues 24–222 (AVPRKPVDVP…WSKAPFVASY (199 aa)) form the GH16 domain. Glutamate 108 functions as the Nucleophile in the catalytic mechanism. Residue glutamate 112 is the Proton donor of the active site. Glutamate 112 lines the xyloglucan pocket. Asparagine 116 is a glycosylation site (N-linked (GlcNAc...) asparagine). Residues 125–127 (QTN), 135–137 (DRE), 201–202 (DW), and glycine 206 contribute to the xyloglucan site. Intrachain disulfides connect cysteine 230–cysteine 239 and cysteine 276–cysteine 289. Arginine 281 lines the xyloglucan pocket.

It belongs to the glycosyl hydrolase 16 family. XTH group 1 subfamily. Post-translationally, contains at least one intrachain disulfide bond essential for its enzymatic activity. As to expression, expressed in fruit pulp.

The protein localises to the secreted. It localises to the cell wall. It is found in the extracellular space. The protein resides in the apoplast. The catalysed reaction is breaks a beta-(1-&gt;4) bond in the backbone of a xyloglucan and transfers the xyloglucanyl segment on to O-4 of the non-reducing terminal glucose residue of an acceptor, which can be a xyloglucan or an oligosaccharide of xyloglucan.. Functionally, catalyzes xyloglucan endotransglycosylation (XET). Cleaves and religates xyloglucan polymers. Does not catalyze xyloglucan endohydrolysis (XEH). Probably involved in cell wall restructuring during fruit ripening and postharvest fruit softening. In Diospyros kaki (Kaki persimmon), this protein is Xyloglucan endotransglucosylase protein 2.